Reading from the N-terminus, the 329-residue chain is Peroxidase 50 (329 aa).

Positions 1–25 are cleaved as a signal peptide; that stretch reads MVVVNKTNLLLLLLSLCLTLDLSSA. 4 disulfide bridges follow: Cys-36-Cys-119, Cys-69-Cys-74, Cys-125-Cys-325, and Cys-204-Cys-236. The Proton acceptor role is filled by His-67. Ca(2+) is bound by residues Asp-68, Val-71, Gly-73, Asp-75, and Ser-77. Pro-167 serves as a coordination point for substrate. His-197 lines the heme b pocket. Thr-198 contributes to the Ca(2+) binding site. Residue Asn-215 is glycosylated (N-linked (GlcNAc...) asparagine). Ca(2+)-binding residues include Asp-249, Thr-252, and Asp-257.

The protein belongs to the peroxidase family. Classical plant (class III) peroxidase subfamily. Requires heme b as cofactor. The cofactor is Ca(2+). In terms of tissue distribution, expressed in roots and leaves.

It localises to the secreted. The enzyme catalyses 2 a phenolic donor + H2O2 = 2 a phenolic radical donor + 2 H2O. Removal of H(2)O(2), oxidation of toxic reductants, biosynthesis and degradation of lignin, suberization, auxin catabolism, response to environmental stresses such as wounding, pathogen attack and oxidative stress. These functions might be dependent on each isozyme/isoform in each plant tissue. Its function is as follows. Exhibits a Ca(2+)-pectate binding affinity which could be interpreted in vivo as a specificity to interact with the pectic structure of the cell wall. The polypeptide is Peroxidase 50 (PER50) (Arabidopsis thaliana (Mouse-ear cress)).